A 686-amino-acid polypeptide reads, in one-letter code: Methionine--tRNA ligase (686 aa).

The 'HIGH' region motif lies at 15-25 (PYANGSIHLGH). Cys-146, Cys-149, Cys-159, and Cys-162 together coordinate Zn(2+). The 'KMSKS' region signature appears at 332–336 (KMSKS). Position 335 (Lys-335) interacts with ATP. The tract at residues 550 to 571 (AAAEAAAKEKAEAEKEQASQTE) is disordered. Positions 585–686 (AFSAVDMRIA…EGAQPGMRVM (102 aa)) constitute a tRNA-binding domain.

It belongs to the class-I aminoacyl-tRNA synthetase family. MetG type 1 subfamily. As to quaternary structure, homodimer. Zn(2+) serves as cofactor.

Its subcellular location is the cytoplasm. It catalyses the reaction tRNA(Met) + L-methionine + ATP = L-methionyl-tRNA(Met) + AMP + diphosphate. In terms of biological role, is required not only for elongation of protein synthesis but also for the initiation of all mRNA translation through initiator tRNA(fMet) aminoacylation. The protein is Methionine--tRNA ligase of Vibrio atlanticus (strain LGP32) (Vibrio splendidus (strain Mel32)).